The chain runs to 640 residues: Fructose-1,6-bisphosphatase class 3 (640 aa).

This sequence belongs to the FBPase class 3 family. Mn(2+) is required as a cofactor.

It carries out the reaction beta-D-fructose 1,6-bisphosphate + H2O = beta-D-fructose 6-phosphate + phosphate. Its pathway is carbohydrate biosynthesis; gluconeogenesis. The sequence is that of Fructose-1,6-bisphosphatase class 3 from Lactococcus lactis subsp. lactis (strain IL1403) (Streptococcus lactis).